The sequence spans 318 residues: Taste receptor type 2 member 14 (318 aa).

Topologically, residues 1–7 (MGGVIKN) are extracellular. The helical transmembrane segment at 8 to 28 (ISTFVLIVEFIIGNLGNSFIA) threads the bilayer. Residues 29–55 (LVNCIDWVKRRKISLVDQLLTALAISR) are Cytoplasmic-facing. Residues 56–76 (ISLVWLIFGSWCVSAFFPALF) traverse the membrane as a helical segment. The Extracellular segment spans residues 77-87 (ATEKMFRMLTN). Residues Thr-86 and Trp-89 each coordinate cholesterol. The helical transmembrane segment at 88–108 (IWAVTNHFSVWLATGLGTFYF) threads the bilayer. The Cytoplasmic segment spans residues 109 to 129 (LKIANFSNSIFIYLKWRVKKV). Residues 130-150 (VLVLLLVTSVFLFLNIALINI) form a helical membrane-spanning segment. Topologically, residues 151–184 (HINASINGYGGNKTCSSDSNDFTRFSSLIALTSS) are extracellular. 2 N-linked (GlcNAc...) asparagine glycosylation sites follow: Asn-153 and Asn-162. A cholesterol-binding site is contributed by Ala-180. The helical transmembrane segment at 185–205 (VFIFIPFILSLAIFLLLTFSL) threads the bilayer. Residues 206–232 (WKHCKKMQHTVKASGDASTKAHRGVMQ) are Cytoplasmic-facing. Residues 233 to 253 (TVIAFLLLYPIFSLSFFIAVW) traverse the membrane as a helical segment. Topologically, residues 254 to 261 (TSGWLEEN) are extracellular. The chain crosses the membrane as a helical span at residues 262 to 282 (LIILSQVMGMAYPSCHSCILI). Cholesterol is bound by residues Leu-265 and Val-268. Over 283-317 (LGNKKLRQASLSVLWWLKYRFKDGEPSGHKGFRES) the chain is Cytoplasmic.

The protein belongs to the G-protein coupled receptor T2R family. In terms of assembly, core component of the TAS2R14-GNAI1 complex, consisting of TAS2R14, GNAI1, GNB1 and GNG2; within the complex interacts with GNAI1. Core component of the TAS2R14-GNAT3 complex, consisting of TAS2R14, GNAT3, GNB1 and GNG2; within the complex interacts with GNAT3. Core component of the TAS2R14-GNAS2 complex, consisting of TAS2R14, GNAS2, GNB1 and GNG2; within the complex interacts with GNAS2.

Its subcellular location is the membrane. The catalysed reaction is Ca(2+)(in) = Ca(2+)(out). It catalyses the reaction 3',5'-cyclic AMP(in) = 3',5'-cyclic AMP(out). Its activity is regulated as follows. Basal activity is enhanced by binding to bitter tastants, such as flufenamic acid and aristolochic acid. Regulated by cholesterol in a concentration-dependent manner. In terms of biological role, gustducin-linked G-protein coupled receptor that plays a role in the perception of bitterness. The activity of this receptor stimulates GNAT3, activating the gustducin G-protein pathway. Likely plays a role in sensing the chemical composition of the gastrointestinal content and other extra-oral tissues via the inhibitory G-protein pathways. In Pongo pygmaeus (Bornean orangutan), this protein is Taste receptor type 2 member 14 (TAS2R14).